A 68-amino-acid polypeptide reads, in one-letter code: Amphipathic peptide CT1 (68 aa).

The N-terminal stretch at 1-23 (MKTQIVILIVAVLFLQLVSQSDA) is a signal peptide. Leu-36 is modified (leucine amide). Positions 40-68 (GLKNLDQYNDLFDGEISDADIKFLKDLMR) are excised as a propeptide.

The protein belongs to the non-disulfide-bridged peptide (NDBP) superfamily. Short antimicrobial peptide (group 4) family. In terms of tissue distribution, expressed by the venom gland.

It is found in the secreted. The protein resides in the target cell membrane. Amphipathic peptide that shows no antibacterial activity even at 50 uM but shows a low hemolytic activity against human erythrocytes. This chain is Amphipathic peptide CT1, found in Mesomexovis subcristatus (Scorpion).